Consider the following 302-residue polypeptide: Decaprenyl-phosphate phosphoribosyltransferase (302 aa).

5-phospho-alpha-D-ribose 1-diphosphate is bound at residue Lys28. Helical transmembrane passes span 30 to 50 (VLVL…DYVE) and 55 to 75 (VSMA…VNDV). 5-phospho-alpha-D-ribose 1-diphosphate is bound at residue Tyr70. The Mg(2+) site is built by Asn73 and Asp77. Residue Lys87 participates in 5-phospho-alpha-D-ribose 1-diphosphate binding. The next 2 membrane-spanning stretches (helical) occupy residues 100–120 (WLAY…AWML) and 122–142 (PNLA…CFGL). Residues Lys143 and Arg160 each coordinate 5-phospho-alpha-D-ribose 1-diphosphate. Transmembrane regions (helical) follow at residues 146–166 (AVVE…AGGV) and 170–190 (IPLS…MVAG). Residue Lys191 participates in trans,octa-cis-decaprenyl phosphate binding. The next 3 helical transmembrane spans lie at 218 to 238 (LRFV…LWAF), 244 to 264 (SGSW…RYAV), and 282 to 302 (RVLQ…VAFG).

The protein belongs to the UbiA prenyltransferase family. DPPR synthase subfamily. Homotrimer. Mg(2+) is required as a cofactor.

The protein resides in the cell inner membrane. The enzyme catalyses trans,octa-cis-decaprenyl phosphate + 5-phospho-alpha-D-ribose 1-diphosphate + H(+) = trans,octa-cis-decaprenylphospho-beta-D-ribofuranose 5-phosphate + diphosphate. It functions in the pathway cell wall biogenesis; cell wall polysaccharide biosynthesis. Functionally, involved in the biosynthesis of decaprenylphosphoryl arabinose (DPA) a precursor for arabinan synthesis in mycobacterial cell wall biosynthesis. Catalyzes the transfer of a 5-phosphoribosyl residue from phosphoribose diphosphate (PRPP) to decaprenyl phosphate (DP) to form decaprenylphosphoryl-5-phosphoribose (DPPR). This is Decaprenyl-phosphate phosphoribosyltransferase from Mycobacterium tuberculosis (strain CDC 1551 / Oshkosh).